A 300-amino-acid polypeptide reads, in one-letter code: 1D-myo-inositol 2-acetamido-2-deoxy-alpha-D-glucopyranoside deacetylase (300 aa).

Residues histidine 13, aspartate 16, and histidine 147 each coordinate Zn(2+).

The protein belongs to the MshB deacetylase family. Requires Zn(2+) as cofactor.

The catalysed reaction is 1D-myo-inositol 2-acetamido-2-deoxy-alpha-D-glucopyranoside + H2O = 1D-myo-inositol 2-amino-2-deoxy-alpha-D-glucopyranoside + acetate. Its function is as follows. Catalyzes the deacetylation of 1D-myo-inositol 2-acetamido-2-deoxy-alpha-D-glucopyranoside (GlcNAc-Ins) in the mycothiol biosynthesis pathway. This chain is 1D-myo-inositol 2-acetamido-2-deoxy-alpha-D-glucopyranoside deacetylase, found in Mycolicibacterium paratuberculosis (strain ATCC BAA-968 / K-10) (Mycobacterium paratuberculosis).